The sequence spans 282 residues: Blarina toxin (282 aa).

Positions 1 to 17 are cleaved as a signal peptide; that stretch reads MCFLLLCLTLTLAGTGA. A propeptide spans 18 to 29 (activation peptide); the sequence is VPTGPSIEIHSR. One can recognise a Peptidase S1 domain in the interval 30-279; the sequence is IIGGWECDKH…YISWIQETIK (250 aa). 5 disulfide bridges follow: C36–C194, C57–C73, C170–C240, C205–C219, and C230–C255. H72 functions as the Charge relay system in the catalytic mechanism. Residue S100 is glycosylated (O-linked (GalNAc...) serine). 2 N-linked (GlcNAc...) asparagine glycosylation sites follow: N109 and N122. The active-site Charge relay system is D138. S234 serves as the catalytic Charge relay system.

This sequence belongs to the peptidase S1 family. Kallikrein subfamily. As to expression, submaxillary and sublingual salivary glands.

It localises to the secreted. With respect to regulation, strongly inhibited by aprotinin, moderately inhibited by secretory leukoprotease inhibitor, the Kunitz-type soybean trypsin inhibitor, and leupeptin, and not inhibited by urinary trypsin inhibitor or alpha-1 protease inhibitor. Functionally, has kallikrein-like activity, converts kininogens to kinins, and has dilatory effects on the blood vessel walls. Shows highest activity toward Pro-Phe-Arg-MCA and Boc-Val-Leu-Lys-MCA in vitro. Has preference for Arg and Lys in position P1 and hydrophobic residues in position P2. In Blarina brevicauda (Northern short-tailed shrew), this protein is Blarina toxin (BTX).